A 450-amino-acid chain; its full sequence is Phosphoglucosamine mutase (450 aa).

Ser101 serves as the catalytic Phosphoserine intermediate. Residues Ser101, Asp240, Asp242, and Asp244 each contribute to the Mg(2+) site. Ser101 carries the phosphoserine modification.

The protein belongs to the phosphohexose mutase family. The cofactor is Mg(2+). In terms of processing, activated by phosphorylation.

It catalyses the reaction alpha-D-glucosamine 1-phosphate = D-glucosamine 6-phosphate. Its function is as follows. Catalyzes the conversion of glucosamine-6-phosphate to glucosamine-1-phosphate. This Streptococcus equi subsp. equi (strain 4047) protein is Phosphoglucosamine mutase.